A 174-amino-acid polypeptide reads, in one-letter code: MGKITFYEDRAFQGRSYETTTDCPNLQPYFSRCNSIRVESGCWMLYERPNYQGQQYLLRRGEYPDYQQWMGLSDSIRSCCLIPQTVSHRLRLYEREDHKGLMMELSEDCPSIQDRFHLSEIRSLHVLEGCWVLYELPNYRGRQYLLRPQEYRRCQDWGAMDAKAGSLRRVVDLY.

2 Beta/gamma crystallin 'Greek key' domains span residues 2–40 and 41–83; these read GKIT…RVES and GCWM…CLIP. Residue C23 is modified to S-methylcysteine. The interval 84 to 87 is connecting peptide; sequence QTVS. Beta/gamma crystallin 'Greek key' domains are found at residues 88–128 and 129–171; these read HRLR…HVLE and GCWV…RRVV.

It belongs to the beta/gamma-crystallin family. As to quaternary structure, monomer.

In terms of biological role, crystallins are the dominant structural components of the vertebrate eye lens. The chain is Gamma-crystallin C (CRYGC) from Homo sapiens (Human).